The primary structure comprises 81 residues: UPF0248 protein TK0315 (81 aa).

This sequence belongs to the UPF0248 family.

This Thermococcus kodakarensis (strain ATCC BAA-918 / JCM 12380 / KOD1) (Pyrococcus kodakaraensis (strain KOD1)) protein is UPF0248 protein TK0315.